A 157-amino-acid polypeptide reads, in one-letter code: MAPLEAPILAIPGENNTHQQQQQQFQYTGQLQKKKAAEGSIEWYFDQTINFMGDHPVITGIGAFAVAYFAAGFIKSNQPGINGKAFVKGGFGAKMTAKEALQILNLKETNLSKLKLKEQHRKLMMANHPDKGGSSYIATKINEAKDFLDKRGGMKPK.

The Mitochondrial intermembrane portion of the chain corresponds to 1-56 (MAPLEAPILAIPGENNTHQQQQQQFQYTGQLQKKKAAEGSIEWYFDQTINFMGDHP). A helical membrane pass occupies residues 57-74 (VITGIGAFAVAYFAAGFI). Residues 75–157 (KSNQPGINGK…LDKRGGMKPK (83 aa)) are Mitochondrial matrix-facing. Residues 99–157 (EALQILNLKETNLSKLKLKEQHRKLMMANHPDKGGSSYIATKINEAKDFLDKRGGMKPK) form the J domain.

This sequence belongs to the TIM14 family. In terms of assembly, heterodimer with PAM16. Component of the PAM complex, at least composed of mtHsp70, MGE1, TIM44, PAM16, PAM17 and PAM18.

The protein localises to the mitochondrion inner membrane. Its function is as follows. Essential component of the PAM complex, a complex required for the translocation of transit peptide-containing proteins from the inner membrane into the mitochondrial matrix in an ATP-dependent manner. In the complex, it is required to stimulate activity of mtHSP70 (SSC1). In Candida albicans (strain SC5314 / ATCC MYA-2876) (Yeast), this protein is Mitochondrial import inner membrane translocase subunit TIM14 (PAM18).